Here is a 485-residue protein sequence, read N- to C-terminus: Probable glycine dehydrogenase (decarboxylating) subunit 2 (485 aa).

Lys-273 carries the post-translational modification N6-(pyridoxal phosphate)lysine.

Belongs to the GcvP family. C-terminal subunit subfamily. In terms of assembly, the glycine cleavage system is composed of four proteins: P, T, L and H. In this organism, the P 'protein' is a heterodimer of two subunits. Pyridoxal 5'-phosphate is required as a cofactor.

It carries out the reaction N(6)-[(R)-lipoyl]-L-lysyl-[glycine-cleavage complex H protein] + glycine + H(+) = N(6)-[(R)-S(8)-aminomethyldihydrolipoyl]-L-lysyl-[glycine-cleavage complex H protein] + CO2. The glycine cleavage system catalyzes the degradation of glycine. The P protein binds the alpha-amino group of glycine through its pyridoxal phosphate cofactor; CO(2) is released and the remaining methylamine moiety is then transferred to the lipoamide cofactor of the H protein. The protein is Probable glycine dehydrogenase (decarboxylating) subunit 2 of Caldanaerobacter subterraneus subsp. tengcongensis (strain DSM 15242 / JCM 11007 / NBRC 100824 / MB4) (Thermoanaerobacter tengcongensis).